The sequence spans 692 residues: Elongation factor G (692 aa).

The tr-type G domain occupies 8 to 282; it reads AKTRNIGIMA…AVIAYLPSPL (275 aa). Residues 17-24, 81-85, and 135-138 each bind GTP; these read AHVDAGKT, DTPGH, and NKMD.

The protein belongs to the TRAFAC class translation factor GTPase superfamily. Classic translation factor GTPase family. EF-G/EF-2 subfamily.

The protein resides in the cytoplasm. Its function is as follows. Catalyzes the GTP-dependent ribosomal translocation step during translation elongation. During this step, the ribosome changes from the pre-translocational (PRE) to the post-translocational (POST) state as the newly formed A-site-bound peptidyl-tRNA and P-site-bound deacylated tRNA move to the P and E sites, respectively. Catalyzes the coordinated movement of the two tRNA molecules, the mRNA and conformational changes in the ribosome. This Streptococcus pyogenes serotype M1 protein is Elongation factor G (fus).